The following is a 67-amino-acid chain: MPVELKSFDEFVKVVERAVECRVKRGKDVVKIKARTKRYLYTLKVPPEKEAEVLEQVKAKCKNLVEL.

Belongs to the eukaryotic ribosomal protein eL38 family.

The protein is Large ribosomal subunit protein eL38 (rpl38e) of Aeropyrum pernix (strain ATCC 700893 / DSM 11879 / JCM 9820 / NBRC 100138 / K1).